The sequence spans 234 residues: Sugar fermentation stimulation protein homolog (234 aa).

Belongs to the SfsA family.

The polypeptide is Sugar fermentation stimulation protein homolog (Shewanella baltica (strain OS223)).